Reading from the N-terminus, the 168-residue chain is MSNQVIILGLDPGTKITGFGVIRIEGHQYVPVDYGCIRPPSHYKLSERYLVICQGVEQLIDQHQPHAVVVETQYVSKNVQSAMKLGMARGVIMIAAKKRGIPIYEYAPSKAKLAVVGTGRASKYQVQGMVQRLLNLSIPPTPEDAADALALAICHAQMPILKQSQYET.

Active-site residues include aspartate 11, glutamate 71, and aspartate 144. 3 residues coordinate Mg(2+): aspartate 11, glutamate 71, and aspartate 144.

This sequence belongs to the RuvC family. Homodimer which binds Holliday junction (HJ) DNA. The HJ becomes 2-fold symmetrical on binding to RuvC with unstacked arms; it has a different conformation from HJ DNA in complex with RuvA. In the full resolvosome a probable DNA-RuvA(4)-RuvB(12)-RuvC(2) complex forms which resolves the HJ. Requires Mg(2+) as cofactor.

It is found in the cytoplasm. It carries out the reaction Endonucleolytic cleavage at a junction such as a reciprocal single-stranded crossover between two homologous DNA duplexes (Holliday junction).. Its function is as follows. The RuvA-RuvB-RuvC complex processes Holliday junction (HJ) DNA during genetic recombination and DNA repair. Endonuclease that resolves HJ intermediates. Cleaves cruciform DNA by making single-stranded nicks across the HJ at symmetrical positions within the homologous arms, yielding a 5'-phosphate and a 3'-hydroxyl group; requires a central core of homology in the junction. The consensus cleavage sequence is 5'-(A/T)TT(C/G)-3'. Cleavage occurs on the 3'-side of the TT dinucleotide at the point of strand exchange. HJ branch migration catalyzed by RuvA-RuvB allows RuvC to scan DNA until it finds its consensus sequence, where it cleaves and resolves the cruciform DNA. In Protochlamydia amoebophila (strain UWE25), this protein is Crossover junction endodeoxyribonuclease RuvC.